The sequence spans 34 residues: Turripeptide Pal9a (34 aa).

Disulfide bonds link Cys3/Cys17, Cys8/Cys19, and Cys13/Cys30. Position 34 is a glutamine amide (Gln34).

As to expression, expressed by the venom duct.

The protein resides in the secreted. This chain is Turripeptide Pal9a, found in Polystira albida (White giant-turris).